Consider the following 165-residue polypeptide: Bark lectin isoform 1 (165 aa).

Residues Asn27 and Asn57 are each glycosylated (N-linked (GlcNAc...) asparagine). Intrachain disulfides connect Cys33/Cys80 and Cys126/Cys133.

This sequence belongs to the protease inhibitor I3 (leguminous Kunitz-type inhibitor) family. Dimer.

Its function is as follows. Glucose and N-acetylglucosamine binding lectin. Has hemagglutinating activity against human and rabbit erythrocytes which does not require divalent cations. Inhibits factor Xa and, to a lesser extent, trypsin. Does not inhibit neutrophil elastase, human plasma kallikrein, papain, human plasmin, porcine pancreatic kallikrein and bovin chymotrypsin. Has insecticidal activity against the termite species N.corniger. Induces apoptosis in prostrate cancer cell lines DU145 and PC3. The protein is Bark lectin isoform 1 of Crateva tapia (Garlic-pear tree).